Reading from the N-terminus, the 115-residue chain is Large ribosomal subunit protein bL19 (115 aa).

It belongs to the bacterial ribosomal protein bL19 family.

Its function is as follows. This protein is located at the 30S-50S ribosomal subunit interface and may play a role in the structure and function of the aminoacyl-tRNA binding site. This Lactobacillus acidophilus (strain ATCC 700396 / NCK56 / N2 / NCFM) protein is Large ribosomal subunit protein bL19.